A 115-amino-acid chain; its full sequence is Glycine cleavage system H-like protein (115 aa).

The region spanning 17–99 is the Lipoyl-binding domain; that stretch reads VVRLGLTEKM…EGEGWLAVVR (83 aa). Lys-58 carries the post-translational modification N6-lipoyllysine.

It belongs to the GcvH family. The cofactor is (R)-lipoate.

This is Glycine cleavage system H-like protein from Chlamydia pneumoniae (Chlamydophila pneumoniae).